A 388-amino-acid polypeptide reads, in one-letter code: Mannitol-1-phosphate 5-dehydrogenase (388 aa).

Residue 5–16 (AIQFGGGNIGRG) coordinates NAD(+). Residue K213 is part of the active site.

It belongs to the mannitol dehydrogenase family. In terms of assembly, monomer.

The enzyme catalyses D-mannitol 1-phosphate + NAD(+) = beta-D-fructose 6-phosphate + NADH + H(+). Its function is as follows. Catalyzes the NAD(H)-dependent interconversion of D-fructose 6-phosphate and D-mannitol 1-phosphate in the mannitol metabolic pathway. This is Mannitol-1-phosphate 5-dehydrogenase (mpdA) from Aspergillus fumigatus (strain CBS 144.89 / FGSC A1163 / CEA10) (Neosartorya fumigata).